Here is a 374-residue protein sequence, read N- to C-terminus: Alanine racemase (374 aa).

Lys-40 functions as the Proton acceptor; specific for D-alanine in the catalytic mechanism. At Lys-40 the chain carries N6-(pyridoxal phosphate)lysine. Residue Arg-136 coordinates substrate. The Proton acceptor; specific for L-alanine role is filled by Tyr-264. Residue Met-311 coordinates substrate.

This sequence belongs to the alanine racemase family. Requires pyridoxal 5'-phosphate as cofactor.

The enzyme catalyses L-alanine = D-alanine. It participates in amino-acid biosynthesis; D-alanine biosynthesis; D-alanine from L-alanine: step 1/1. Catalyzes the interconversion of L-alanine and D-alanine. May also act on other amino acids. This is Alanine racemase (alr) from Pediococcus pentosaceus (strain ATCC 25745 / CCUG 21536 / LMG 10740 / 183-1w).